The following is a 399-amino-acid chain: Acetylornithine aminotransferase (399 aa).

Residues 97 to 98 (GA) and phenylalanine 130 each bind pyridoxal 5'-phosphate. Arginine 133 is a N(2)-acetyl-L-ornithine binding site. Residue 215–218 (DEVQ) coordinates pyridoxal 5'-phosphate. At lysine 244 the chain carries N6-(pyridoxal phosphate)lysine. A N(2)-acetyl-L-ornithine-binding site is contributed by threonine 272. Pyridoxal 5'-phosphate is bound at residue threonine 273.

The protein belongs to the class-III pyridoxal-phosphate-dependent aminotransferase family. ArgD subfamily. As to quaternary structure, homodimer. Pyridoxal 5'-phosphate is required as a cofactor.

It localises to the cytoplasm. It carries out the reaction N(2)-acetyl-L-ornithine + 2-oxoglutarate = N-acetyl-L-glutamate 5-semialdehyde + L-glutamate. Its pathway is amino-acid biosynthesis; L-arginine biosynthesis; N(2)-acetyl-L-ornithine from L-glutamate: step 4/4. The chain is Acetylornithine aminotransferase from Mesorhizobium japonicum (strain LMG 29417 / CECT 9101 / MAFF 303099) (Mesorhizobium loti (strain MAFF 303099)).